The sequence spans 677 residues: UPF0313 protein RPA0679 (677 aa).

The Radical SAM core domain occupies 335 to 601; it reads AWDMIKTSVT…VEAIKGLRQR (267 aa). [4Fe-4S] cluster is bound by residues cysteine 349, cysteine 353, and cysteine 356. The disordered stretch occupies residues 635-677; that stretch reads RPDQLVPAHQPPGTGKAAGTRRPVRGDGPKPQRFTTKGVRLVK.

This sequence belongs to the UPF0313 family. The cofactor is [4Fe-4S] cluster.

In Rhodopseudomonas palustris (strain ATCC BAA-98 / CGA009), this protein is UPF0313 protein RPA0679.